The primary structure comprises 248 residues: MQRSECSGGVQLRNRATGSNDQRTSSSTQMKHRTTVQRSKSSSLTSSPEAARRARPRPSDKLNPKTINPFGEQPRAPTAFAAIYSQGGIPCRLVHGSVKHRLQWECPPEILPFDPLLITLAEGLRETKHPYTFVSKEGFRELLLVKGAPEKAIPLLPRLIPVLKAALVHSDDEVFERGLSALVQLSVVVGPSLNGHLKLLLTSLSKRLMDKKFKEPITSALQKLEQHGGNASLIIIKSKIPTYCSICC.

The residue at position 1 (M1) is an N-acetylmethionine. Residues 1-72 (MQRSECSGGV…NPKTINPFGE (72 aa)) are disordered. 2 stretches are compositionally biased toward polar residues: residues 14–29 (NRAT…SSTQ) and 36–45 (VQRSKSSSLT). A Phosphoserine modification is found at S47.

This chain is PACRG-like protein (Pacrgl), found in Mus musculus (Mouse).